We begin with the raw amino-acid sequence, 613 residues long: Ethylene response sensor 1 (613 aa).

3 helical membrane-spanning segments follow: residues 23–43 (ISDA…IYFV), 58–78 (FGAF…MFFM), and 95–115 (AVVS…LLSV). The Cu cation site is built by cysteine 65 and histidine 69. One can recognise a GAF domain in the interval 158–307 (DRHTILRTTL…NVADQVAVAL (150 aa)). One can recognise a Histidine kinase domain in the interval 350–589 (VMNHEMRTPM…SFIIRLGICN (240 aa)). Phosphohistidine; by autocatalysis is present on histidine 353.

The protein belongs to the ethylene receptor family. Homodimer; disulfide-linked. Heteromer with ETR1. Cu cation serves as cofactor. Post-translationally, autophosphorylated on both His and Ser residues in the presence of manganese. Loss of His autophosphorylation in the presence of both manganese and magnesium. Expressed in etiolated seedlings, leaves, stems, roots, flowers, embryos, anthers, carpels and ovules.

The protein localises to the endoplasmic reticulum membrane. It catalyses the reaction ATP + protein L-histidine = ADP + protein N-phospho-L-histidine.. In terms of biological role, ethylene receptor related to bacterial two-component regulators. Acts as a redundant negative regulator of ethylene signaling. In Arabidopsis thaliana (Mouse-ear cress), this protein is Ethylene response sensor 1 (ERS1).